A 310-amino-acid polypeptide reads, in one-letter code: Putrescinyltransferase (310 aa).

Belongs to the thymidine aminotransferase family.

It catalyses the reaction 5-phosphomethyl-dUMP in DNA + putrescine = 5-N(alpha)-putrescinyl-dTMP in DNA + phosphate. In terms of biological role, transfers putrescine to 5-phosphomethyl-2'-deoxyuridine (5-PmdU) to produce 5-Nalpha-putrescinylthymidine (Nalpha-PutT) as a step in the pathway leading to thymidine hypermodifications in the viral genome. As a final result of the pathway of hypermodification, Nalpha-PutT substitutes for about 50% of thymidines in the viral DNA. These modifications probably prevent degradation of viral genome by the host restriction-modification antiviral defense system. This chain is Putrescinyltransferase, found in Delftia phage PhiW-14 (Deftia acidovorans bacteriophage phiW-14).